The following is a 178-amino-acid chain: Large ribosomal subunit protein eL20y (178 aa).

It belongs to the eukaryotic ribosomal protein eL20 family.

This Arabidopsis thaliana (Mouse-ear cress) protein is Large ribosomal subunit protein eL20y (RPL18AB).